Here is a 500-residue protein sequence, read N- to C-terminus: L-arabinose isomerase (500 aa).

Glu-306, Glu-333, His-350, and His-450 together coordinate Mn(2+).

Belongs to the arabinose isomerase family. Homohexamer. The cofactor is Mn(2+).

The enzyme catalyses beta-L-arabinopyranose = L-ribulose. The protein operates within carbohydrate degradation; L-arabinose degradation via L-ribulose; D-xylulose 5-phosphate from L-arabinose (bacterial route): step 1/3. In terms of biological role, catalyzes the conversion of L-arabinose to L-ribulose. This is L-arabinose isomerase from Yersinia pestis (strain Pestoides F).